Consider the following 242-residue polypeptide: ATP synthase subunit a (242 aa).

7 helical membrane-spanning segments follow: residues Ile23 to Leu43, Val62 to Leu82, Tyr84 to Leu104, His113 to Phe133, Ile143 to Phe163, Leu176 to Lys196, and Leu201 to Ile221.

The protein belongs to the ATPase A chain family. As to quaternary structure, F-type ATPases have 2 components, CF(1) - the catalytic core - and CF(0) - the membrane proton channel. CF(1) has five subunits: alpha(3), beta(3), gamma(1), delta(1), epsilon(1). CF(0) has three main subunits: a(1), b(2) and c(9-12). The alpha and beta chains form an alternating ring which encloses part of the gamma chain. CF(1) is attached to CF(0) by a central stalk formed by the gamma and epsilon chains, while a peripheral stalk is formed by the delta and b chains.

The protein resides in the cell inner membrane. Its function is as follows. Key component of the proton channel; it plays a direct role in the translocation of protons across the membrane. This Anaplasma phagocytophilum (strain HZ) protein is ATP synthase subunit a.